The chain runs to 291 residues: 3-hydroxy-5-phosphonooxypentane-2,4-dione thiolase (291 aa).

Lys203 (schiff-base intermediate with substrate) is an active-site residue.

It belongs to the DeoC/FbaB aldolase family. As to quaternary structure, homodecamer.

The protein localises to the cytoplasm. The enzyme catalyses dihydroxyacetone phosphate + acetyl-CoA = 3-hydroxy-2,4-dioxopentyl phosphate + CoA. Its function is as follows. Involved in the degradation of phospho-AI-2, thereby terminating induction of the lsr operon and closing the AI-2 signaling cycle. Catalyzes the transfer of an acetyl moiety from 3-hydroxy-5-phosphonooxypentane-2,4-dione to CoA to form glycerone phosphate and acetyl-CoA. The polypeptide is 3-hydroxy-5-phosphonooxypentane-2,4-dione thiolase (Salmonella paratyphi A (strain ATCC 9150 / SARB42)).